Consider the following 1408-residue polypeptide: Palladin (1408 aa).

Positions 69-229 are disordered; that stretch reads SKSPISLCET…SASQSPTADQ (161 aa). Polar residues-rich tracts occupy residues 149–169 and 193–229; these read PNPS…QSQL and RSPN…TADQ. Ser-194 bears the Phosphoserine mark. Ig-like C2-type domains follow at residues 278–367 and 448–546; these read PRFI…AEVF and PVFT…LVIT. Cystine bridges form between Cys-299-Cys-351 and Cys-469-Cys-528. The interval 569–573 is interaction with VASP; it reads FPPPP. Disordered regions lie at residues 631–660 and 687–727; these read NGKA…LAKP and PPGV…VPSE. Ser-639 bears the Phosphoserine mark. The residue at position 642 (Thr-642) is a Phosphothreonine. Position 648 is a phosphoserine (Ser-648). Residues 653-683 are interaction with LASP1; sequence PPPLLAKPKLDPLKLQQLQNQVRLEQEACAW. The segment at 683–713 is interaction with SORBS2, SPIN90 and SRC; that stretch reads WPPAPPGVPCNSSSSGSSAPPSPPFPPPPPA. Over residues 691-701 the composition is skewed to low complexity; sequence PCNSSSSGSSA. A phosphoserine mark is found at Ser-700, Ser-704, and Ser-744. Over residues 702 to 714 the composition is skewed to pro residues; sequence PPSPPFPPPPPAF. Disordered stretches follow at residues 758-854, 882-904, and 960-981; these read NLGP…RFGP, KGVT…SDEE, and ETAA…LDGQ. Residues 765–779 are compositionally biased toward low complexity; sequence LPTPTSSPSSSSLPS. 3 stretches are compositionally biased toward pro residues: residues 780 to 797, 807 to 818, and 828 to 840; these read PLSP…PPFV, SPSPPPPPPPVF, and DVFP…PPLP. Residues 782–842 form an interaction with EPS8 region; sequence SPTPRPFGRA…PPPPPPLPSS (61 aa). Residues 807–842 form an interaction with SORBS2, SPIN90, SRC and PFN1 region; that stretch reads SPSPPPPPPPVFSPSAAYPVPDVFPLPPPPPPLPSS. The interval 830 to 834 is interaction with VASP; the sequence is FPLPP. Phosphoserine is present on Ser-901. Phosphoserine occurs at positions 1004 and 1009. Residues 1026–1110 form the Ig-like C2-type 3 domain; that stretch reads PFFEMKLKHY…MAANPQGRVS (85 aa). Residues 1121-1150 are disordered; that stretch reads NQRGRSPRSPSGHPHARRPRSRSRDSGDEN. Low complexity predominate over residues 1123–1133; sequence RGRSPRSPSGH. Phosphoserine occurs at positions 1126, 1129, 1131, and 1141. Ser-1143 is subject to Phosphoserine; by PKB/AKT1. Ser-1146 carries the post-translational modification Phosphoserine. Ig-like C2-type domains follow at residues 1160–1251 and 1259–1349; these read PHFL…LVVA and PVFM…ARLD. Interaction with EZR stretches follow at residues 1162–1251 and 1261–1351; these read FLQA…LVVA and FMEK…LDVY. Cys-1181 and Cys-1233 form a disulfide bridge. A Phosphoserine modification is found at Ser-1377.

The protein belongs to the myotilin/palladin family. Interacts with EPS8. Interacts with LASP1. Interacts with VASP. Interacts with ACTN. Interacts with SORBS2. Interacts with PFN1. Interacts with LPP. Interacts with SPIN90. Interacts with SRC. Interacts with EZR. Interacts with RAI14. Phosphorylated predominantly on serines and, to a lesser extent, on tyrosines. Phosphorylation at Ser-1143 by PKB/AKT1 modulates cytoskeletal organization and cell motility. As to expression, detected in both muscle and non-muscle tissues and cells (at protein level). Isoform 3 is widely expressed, isoform 4 is particularly abundant in tissues rich in smooth muscle and in the cardiac muscle and isoform 1 is detected in heart.

The protein localises to the cytoplasm. Its subcellular location is the cytoskeleton. The protein resides in the cell junction. It is found in the focal adhesion. It localises to the myofibril. The protein localises to the sarcomere. Its subcellular location is the z line. The protein resides in the cell projection. It is found in the ruffle. It localises to the podosome. The protein localises to the lamellipodium. Its subcellular location is the axon. The protein resides in the growth cone. Functionally, cytoskeletal protein required for organization of normal actin cytoskeleton. Roles in establishing cell morphology, motility, cell adhesion and cell-extracellular matrix interactions in a variety of cell types. May function as a scaffolding molecule with the potential to influence both actin polymerization and the assembly of existing actin filaments into higher-order arrays. Binds to proteins that bind to either monomeric or filamentous actin. Localizes at sites where active actin remodeling takes place, such as lamellipodia and membrane ruffles. Different isoforms may have functional differences. Involved in the control of morphological and cytoskeletal changes associated with dendritic cell maturation. Involved in targeting ACTN to specific subcellular locations. May be required for the initiation of neural tube closure. In Mus musculus (Mouse), this protein is Palladin (Palld).